Here is a 129-residue protein sequence, read N- to C-terminus: Glycine cleavage system H protein (129 aa).

The Lipoyl-binding domain occupies 23–104 (TVTVGITQHA…SYSAWLFKLK (82 aa)). At K64 the chain carries N6-lipoyllysine.

This sequence belongs to the GcvH family. The glycine cleavage system is composed of four proteins: P, T, L and H. (R)-lipoate serves as cofactor.

Functionally, the glycine cleavage system catalyzes the degradation of glycine. The H protein shuttles the methylamine group of glycine from the P protein to the T protein. The chain is Glycine cleavage system H protein from Nitrosomonas eutropha (strain DSM 101675 / C91 / Nm57).